We begin with the raw amino-acid sequence, 302 residues long: Glutaminase (302 aa).

Residues Ser61, Asn111, Glu155, Asn162, Tyr186, Tyr238, and Val256 each contribute to the substrate site.

Belongs to the glutaminase family. Homotetramer.

The enzyme catalyses L-glutamine + H2O = L-glutamate + NH4(+). This is Glutaminase from Pseudomonas aeruginosa (strain ATCC 15692 / DSM 22644 / CIP 104116 / JCM 14847 / LMG 12228 / 1C / PRS 101 / PAO1).